A 445-amino-acid polypeptide reads, in one-letter code: MQENYKAKAYDILKNLNIEEGDLIEIKKGDLRIRGILLPSYSKDERIFVIKLDNGYNIGISIDNISEIKLITKNSSKAQESERKEVSRNGAKSEIKIISTGGTIVSKVEYETGAVRPALTTEEIVQFLPEINEIAKVDAEVLFSILSENMKPEYWVKIAESVKKAFDEGNTGVVIAHGTDTMAYTASALAFSLRSLQGPVVLVGSQRSSDRPSSDSAINLLSAVTTAKYAPFGEVVVNMHADSSDTYALVHRGVKVRKMHSSRRDAFQSVNDKPLAKVLWKERKLVMLDKSYMSKKGETTLDAKFDNRAFLLYYYPGLDRDFLEHILTNTKIRGLIIAGTGLGHTSSDYVELFRKATKDGIFIGMTTQCLFGRVNMNVYTTGRQLLDAGVTPLEDMLPEVALVKLMWVLAHEQDLEKIRSLMISNLVGEINPRHTLDLFPRWSYE.

Residues 93–425 enclose the Asparaginase/glutaminase domain; the sequence is SEIKIISTGG…EKIRSLMISN (333 aa). Catalysis depends on residues threonine 103, threonine 179, aspartate 180, and lysine 258.

It belongs to the asparaginase 1 family. GatD subfamily. In terms of assembly, heterodimer of GatD and GatE.

It carries out the reaction L-glutamyl-tRNA(Gln) + L-glutamine + ATP + H2O = L-glutaminyl-tRNA(Gln) + L-glutamate + ADP + phosphate + H(+). In terms of biological role, allows the formation of correctly charged Gln-tRNA(Gln) through the transamidation of misacylated Glu-tRNA(Gln) in organisms which lack glutaminyl-tRNA synthetase. The reaction takes place in the presence of glutamine and ATP through an activated gamma-phospho-Glu-tRNA(Gln). The GatDE system is specific for glutamate and does not act on aspartate. The polypeptide is Glutamyl-tRNA(Gln) amidotransferase subunit D (Saccharolobus islandicus (strain Y.N.15.51 / Yellowstone #2) (Sulfolobus islandicus)).